The primary structure comprises 101 residues: Small ribosomal subunit protein uS14 (101 aa).

Positions 1-25 (MAKVSAIQKNKSRQKKSQRLHNKRS) are disordered. Residues 10 to 25 (NKSRQKKSQRLHNKRS) show a composition bias toward basic residues.

Belongs to the universal ribosomal protein uS14 family. In terms of assembly, part of the 30S ribosomal subunit. Contacts proteins S3 and S10.

Binds 16S rRNA, required for the assembly of 30S particles and may also be responsible for determining the conformation of the 16S rRNA at the A site. The protein is Small ribosomal subunit protein uS14 of Rickettsia typhi (strain ATCC VR-144 / Wilmington).